The sequence spans 175 residues: MAEKRNIFLVGPMGAGKSTIGRQLAQQLGMEFFDSDSVIEERAGAEISWIFDIEGENGFRKREERIINELTQKQGIVLSTGGGVVLSKENRNHLSARGIVVYLQTTVAKQFERTQRDKKRPLLQGVEDARQVLENLAVIRNPLYEEVADITLPTDEQSAKVMANQIIDLIDNFHG.

14 to 19 (GAGKST) is a binding site for ATP. Residue S18 coordinates Mg(2+). Substrate is bound by residues D36, R60, and G82. ATP is bound at residue R120. R140 contacts substrate. Q157 is an ATP binding site.

The protein belongs to the shikimate kinase family. As to quaternary structure, monomer. It depends on Mg(2+) as a cofactor.

Its subcellular location is the cytoplasm. It carries out the reaction shikimate + ATP = 3-phosphoshikimate + ADP + H(+). The protein operates within metabolic intermediate biosynthesis; chorismate biosynthesis; chorismate from D-erythrose 4-phosphate and phosphoenolpyruvate: step 5/7. In terms of biological role, catalyzes the specific phosphorylation of the 3-hydroxyl group of shikimic acid using ATP as a cosubstrate. This is Shikimate kinase from Actinobacillus succinogenes (strain ATCC 55618 / DSM 22257 / CCUG 43843 / 130Z).